The sequence spans 224 residues: Urease accessory protein UreF (224 aa).

Belongs to the UreF family. UreD, UreF and UreG form a complex that acts as a GTP-hydrolysis-dependent molecular chaperone, activating the urease apoprotein by helping to assemble the nickel containing metallocenter of UreC. The UreE protein probably delivers the nickel.

Its subcellular location is the cytoplasm. In terms of biological role, required for maturation of urease via the functional incorporation of the urease nickel metallocenter. This chain is Urease accessory protein UreF, found in Pseudomonas entomophila (strain L48).